The primary structure comprises 512 residues: ATP synthase subunit alpha (512 aa).

169-176 (GDRQTGKT) contacts ATP.

Belongs to the ATPase alpha/beta chains family. F-type ATPases have 2 components, CF(1) - the catalytic core - and CF(0) - the membrane proton channel. CF(1) has five subunits: alpha(3), beta(3), gamma(1), delta(1), epsilon(1). CF(0) has three main subunits: a(1), b(2) and c(9-12). The alpha and beta chains form an alternating ring which encloses part of the gamma chain. CF(1) is attached to CF(0) by a central stalk formed by the gamma and epsilon chains, while a peripheral stalk is formed by the delta and b chains.

Its subcellular location is the cell inner membrane. It catalyses the reaction ATP + H2O + 4 H(+)(in) = ADP + phosphate + 5 H(+)(out). Its function is as follows. Produces ATP from ADP in the presence of a proton gradient across the membrane. The alpha chain is a regulatory subunit. This is ATP synthase subunit alpha from Rickettsia bellii (strain OSU 85-389).